A 701-amino-acid chain; its full sequence is Elongation factor G (701 aa).

The tr-type G domain occupies 8–291 (SRYRNIGIVA…AVIDYLPAPV (284 aa)). Residues 17-24 (AHVDAGKT), 89-93 (DTPGH), and 143-146 (NKMD) contribute to the GTP site.

It belongs to the TRAFAC class translation factor GTPase superfamily. Classic translation factor GTPase family. EF-G/EF-2 subfamily.

Its subcellular location is the cytoplasm. Functionally, catalyzes the GTP-dependent ribosomal translocation step during translation elongation. During this step, the ribosome changes from the pre-translocational (PRE) to the post-translocational (POST) state as the newly formed A-site-bound peptidyl-tRNA and P-site-bound deacylated tRNA move to the P and E sites, respectively. Catalyzes the coordinated movement of the two tRNA molecules, the mRNA and conformational changes in the ribosome. The polypeptide is Elongation factor G (Pseudomonas fluorescens (strain SBW25)).